The following is a 415-amino-acid chain: Lipoyl synthase, mitochondrial (415 aa).

The transit peptide at 1–33 directs the protein to the mitochondrion; it reads MAASTSHLRSLCSSTRSLSRSGVIVTPIACRGY. 7 residues coordinate [4Fe-4S] cluster: Cys-132, Cys-137, Cys-143, Cys-163, Cys-167, Cys-170, and Ser-378. Residues 148 to 367 enclose the Radical SAM core domain; the sequence is DKSSATATIM…RQRALEMGFL (220 aa).

It belongs to the radical SAM superfamily. Lipoyl synthase family. Requires [4Fe-4S] cluster as cofactor.

It localises to the mitochondrion. It carries out the reaction [[Fe-S] cluster scaffold protein carrying a second [4Fe-4S](2+) cluster] + N(6)-octanoyl-L-lysyl-[protein] + 2 oxidized [2Fe-2S]-[ferredoxin] + 2 S-adenosyl-L-methionine + 4 H(+) = [[Fe-S] cluster scaffold protein] + N(6)-[(R)-dihydrolipoyl]-L-lysyl-[protein] + 4 Fe(3+) + 2 hydrogen sulfide + 2 5'-deoxyadenosine + 2 L-methionine + 2 reduced [2Fe-2S]-[ferredoxin]. It functions in the pathway protein modification; protein lipoylation via endogenous pathway; protein N(6)-(lipoyl)lysine from octanoyl-[acyl-carrier-protein]: step 2/2. Catalyzes the radical-mediated insertion of two sulfur atoms into the C-6 and C-8 positions of the octanoyl moiety bound to the lipoyl domains of lipoate-dependent enzymes, thereby converting the octanoylated domains into lipoylated derivatives. The protein is Lipoyl synthase, mitochondrial of Aspergillus clavatus (strain ATCC 1007 / CBS 513.65 / DSM 816 / NCTC 3887 / NRRL 1 / QM 1276 / 107).